We begin with the raw amino-acid sequence, 372 residues long: Glutamate 5-kinase (372 aa).

Lys-14 lines the ATP pocket. Residues Ser-54, Asp-141, and Asn-153 each coordinate substrate. Thr-173–Asp-174 provides a ligand contact to ATP. The region spanning Arg-280–Met-358 is the PUA domain.

This sequence belongs to the glutamate 5-kinase family.

It is found in the cytoplasm. It catalyses the reaction L-glutamate + ATP = L-glutamyl 5-phosphate + ADP. It participates in amino-acid biosynthesis; L-proline biosynthesis; L-glutamate 5-semialdehyde from L-glutamate: step 1/2. Its function is as follows. Catalyzes the transfer of a phosphate group to glutamate to form L-glutamate 5-phosphate. The protein is Glutamate 5-kinase of Paraburkholderia phytofirmans (strain DSM 17436 / LMG 22146 / PsJN) (Burkholderia phytofirmans).